A 69-amino-acid chain; its full sequence is Disintegrin EC6 subunit beta (69 aa).

A Disintegrin domain is found at 1-65 (NSVHPCCDPV…DCPPNPWNGK (65 aa)). 4 disulfide bridges follow: cysteine 6-cysteine 29, cysteine 20-cysteine 26, cysteine 25-cysteine 50, and cysteine 38-cysteine 57. A Cell attachment site motif is present at residues 42-44 (RGD).

Belongs to the venom metalloproteinase (M12B) family. P-II subfamily. P-IIe sub-subfamily. In terms of assembly, heterodimer with subunit alpha; disulfide-linked. As to expression, expressed by the venom gland.

The protein resides in the secreted. Its function is as follows. Potently inhibits adhesion of alpha-4/beta-1 (ITGA4/ITGB1) and alpha-9/beta-1 (ITGA9/ITGB1) integrins to VCAM1, and adhesion of alpha-5/beta-1 (ITGA5/ITGB1) integrin to fibronectin. Has a much less effect on alpha-IIb/beta-3 (ITGA2B/ITGB3) integrin. Also potently inhibits neutrophil migration across TNF-alpha-activated human umbilical endothelial cells. The sequence is that of Disintegrin EC6 subunit beta from Echis carinatus sochureki (Saw-scaled viper).